The sequence spans 490 residues: Ribulose bisphosphate carboxylase large chain (490 aa).

Residues Asn127 and Thr177 each coordinate substrate. Lys179 (proton acceptor) is an active-site residue. Lys181 contributes to the substrate binding site. 3 residues coordinate Mg(2+): Lys205, Asp207, and Glu208. Residue Lys205 is modified to N6-carboxylysine. His297 serves as the catalytic Proton acceptor. Arg298, His330, and Ser382 together coordinate substrate.

This sequence belongs to the RuBisCO large chain family. Type I subfamily. As to quaternary structure, heterohexadecamer of 8 large chains and 8 small chains. It depends on Mg(2+) as a cofactor.

Its subcellular location is the plastid. It is found in the chloroplast. It catalyses the reaction 2 (2R)-3-phosphoglycerate + 2 H(+) = D-ribulose 1,5-bisphosphate + CO2 + H2O. The enzyme catalyses D-ribulose 1,5-bisphosphate + O2 = 2-phosphoglycolate + (2R)-3-phosphoglycerate + 2 H(+). Functionally, ruBisCO catalyzes two reactions: the carboxylation of D-ribulose 1,5-bisphosphate, the primary event in carbon dioxide fixation, as well as the oxidative fragmentation of the pentose substrate in the photorespiration process. Both reactions occur simultaneously and in competition at the same active site. The polypeptide is Ribulose bisphosphate carboxylase large chain (Cylindrotheca sp. (strain N1) (Marine diatom)).